Consider the following 88-residue polypeptide: ATP synthase F(0) complex subunit f, mitochondrial (88 aa).

N-acetylalanine is present on Ala-2. Ser-3 carries the phosphoserine modification. N6-acetyllysine is present on Lys-16. A helical membrane pass occupies residues 62 to 79 (MVLAAYVVFSYCISYKEL).

Belongs to the ATPase F chain family. As to quaternary structure, component of the ATP synthase complex composed at least of ATP5F1A/subunit alpha, ATP5F1B/subunit beta, ATP5MC1/subunit c (homooctomer), MT-ATP6/subunit a, MT-ATP8/subunit 8, ATP5ME/subunit e, ATP5MF/subunit f, ATP5MG/subunit g, ATP5MK/subunit k, ATP5MJ/subunit j, ATP5F1C/subunit gamma, ATP5F1D/subunit delta, ATP5F1E/subunit epsilon, ATP5PF/subunit F6, ATP5PB/subunit b, ATP5PD/subunit d, ATP5PO/subunit OSCP. ATP synthase complex consists of a soluble F(1) head domain (subunits alpha(3) and beta(3)) - the catalytic core - and a membrane F(0) domain - the membrane proton channel (subunits c, a, 8, e, f, g, k and j). These two domains are linked by a central stalk (subunits gamma, delta, and epsilon) rotating inside the F1 region and a stationary peripheral stalk (subunits F6, b, d, and OSCP).

It is found in the mitochondrion. The protein localises to the mitochondrion inner membrane. Functionally, subunit f, of the mitochondrial membrane ATP synthase complex (F(1)F(0) ATP synthase or Complex V) that produces ATP from ADP in the presence of a proton gradient across the membrane which is generated by electron transport complexes of the respiratory chain. ATP synthase complex consist of a soluble F(1) head domain - the catalytic core - and a membrane F(1) domain - the membrane proton channel. These two domains are linked by a central stalk rotating inside the F(1) region and a stationary peripheral stalk. During catalysis, ATP synthesis in the catalytic domain of F(1) is coupled via a rotary mechanism of the central stalk subunits to proton translocation. In vivo, can only synthesize ATP although its ATP hydrolase activity can be activated artificially in vitro. Part of the complex F(0) domain. This chain is ATP synthase F(0) complex subunit f, mitochondrial, found in Mus musculus (Mouse).